We begin with the raw amino-acid sequence, 1377 residues long: DNA-directed RNA polymerase subunit beta (1377 aa).

The protein belongs to the RNA polymerase beta chain family. The RNAP catalytic core consists of 2 alpha, 1 beta, 1 beta' and 1 omega subunit. When a sigma factor is associated with the core the holoenzyme is formed, which can initiate transcription.

The enzyme catalyses RNA(n) + a ribonucleoside 5'-triphosphate = RNA(n+1) + diphosphate. DNA-dependent RNA polymerase catalyzes the transcription of DNA into RNA using the four ribonucleoside triphosphates as substrates. The polypeptide is DNA-directed RNA polymerase subunit beta (Brucella canis (strain ATCC 23365 / NCTC 10854 / RM-666)).